The sequence spans 2253 residues: Protein Ycf2 (2253 aa).

An ATP-binding site is contributed by 1600-1607 (GFIGTGRS).

The protein belongs to the Ycf2 family.

It is found in the plastid. The protein resides in the chloroplast stroma. In terms of biological role, probable ATPase of unknown function. Its presence in a non-photosynthetic plant (Epifagus virginiana) and experiments in tobacco indicate that it has an essential function which is probably not related to photosynthesis. This Nymphaea alba (White water-lily) protein is Protein Ycf2.